The sequence spans 202 residues: MNILRKIVKNRKDEDTQKPSPASAPPDDDDLWLPPPEYVPLKEFTSKKNMRNFCINGEVKVCSPNGYSFRILRHILRSFDEIYSGNHRMIGLVKVVIGLALSGAPVPEGMNWVYKLRRTLIFQWADSRGPLEGEELEHSQEITWDDDTEFVGLQIRVIARQCHIQGRIWCINTNSRTCQLWSDMSLKTQMSEEDKDSSLLLE.

The interval 1–33 is disordered; the sequence is MNILRKIVKNRKDEDTQKPSPASAPPDDDDLWL. The short motif at 35–38 is the PPXY motif element; the sequence is PPEY. The essential for glycoprotein binding stretch occupies residues 115 to 151; sequence KLRRTLIFQWADSRGPLEGEELEHSQEITWDDDTEFV.

This sequence belongs to the lyssavirus matrix protein family. Homomultimer. Interacts with nucleoprotein and with the cytoplasmic domain of glycoprotein. Interacts with host ATP6V1A; this interaction plays an important role in virion uncoating after viral entry.

The protein resides in the virion membrane. It is found in the host endomembrane system. It localises to the host cytoplasm. Its function is as follows. Plays a major role in assembly, budding and uncoating of virion after membrane fusion. Completely covers the ribonucleoprotein coil and keep it in condensed bullet-shaped form. Inhibits viral transcription and stimulates replication. Plays a major role in early induction of TRAIL-mediated apoptosis in infected neurons. Inhibits the integrated stress response (ISR) in the infected cell by blocking the formation of stress granules. The protein is Matrix protein (M) of Homo sapiens (Human).